Consider the following 314-residue polypeptide: Hydroxyethylthiazole kinase (314 aa).

Position 70 (methionine 70) interacts with substrate. Residues arginine 145 and serine 217 each coordinate ATP. Glycine 244 serves as a coordination point for substrate.

Belongs to the Thz kinase family. Requires Mg(2+) as cofactor.

The enzyme catalyses 5-(2-hydroxyethyl)-4-methylthiazole + ATP = 4-methyl-5-(2-phosphooxyethyl)-thiazole + ADP + H(+). It participates in cofactor biosynthesis; thiamine diphosphate biosynthesis; 4-methyl-5-(2-phosphoethyl)-thiazole from 5-(2-hydroxyethyl)-4-methylthiazole: step 1/1. Its function is as follows. Catalyzes the phosphorylation of the hydroxyl group of 4-methyl-5-beta-hydroxyethylthiazole (THZ). This chain is Hydroxyethylthiazole kinase, found in Bifidobacterium longum (strain DJO10A).